A 238-amino-acid chain; its full sequence is Ribonuclease 3 (238 aa).

Residues 11-136 enclose the RNase III domain; sequence RARLEAAIGY…LIAAIYLDGG (126 aa). Glutamate 49 contributes to the Mg(2+) binding site. Aspartate 53 is an active-site residue. Positions 122 and 125 each coordinate Mg(2+). Glutamate 125 is an active-site residue. The 70-residue stretch at 161–230 folds into the DRBM domain; it reads DAKTELQEWA…AMKLLEREGV (70 aa).

Belongs to the ribonuclease III family. In terms of assembly, homodimer. It depends on Mg(2+) as a cofactor.

Its subcellular location is the cytoplasm. The catalysed reaction is Endonucleolytic cleavage to 5'-phosphomonoester.. Its function is as follows. Digests double-stranded RNA. Involved in the processing of primary rRNA transcript to yield the immediate precursors to the large and small rRNAs (23S and 16S). Processes some mRNAs, and tRNAs when they are encoded in the rRNA operon. Processes pre-crRNA and tracrRNA of type II CRISPR loci if present in the organism. This is Ribonuclease 3 from Rhizobium meliloti (strain 1021) (Ensifer meliloti).